A 123-amino-acid chain; its full sequence is Potassium voltage-gated channel subfamily E member 2 (123 aa).

Residues Asn-6 and Asn-29 are each glycosylated (N-linked (GlcNAc...) asparagine). A helical transmembrane segment spans residues 49–69 (VILYLMVMIGMFSFIIVAILV). Residues 70-123 (STVKSKRREHSNDPYHQYIVEDWQEKYKSQILNLEESKATIHENIGAAGFKMSP) are Cytoplasmic-facing.

It belongs to the potassium channel KCNE family. In terms of assembly, interacts with KCNB1. Associates with KCNH2/ERG1. May associate with KCNQ2 and KCNQ3. Associates with HCN1 and probably HCN2. Heteromultimer with KCNC2. Interacts with KCNC2. Interacts with KCNQ1; forms a heterooligomer complex that targets to the membrane raft and leading to currents with an apparently instantaneous activation, a rapid deactivation process and a linear current-voltage relationship and decreases the amplitude of the outward current. Highly expressed in brain, heart, skeletal muscle, pancreas, placenta, kidney, colon and thymus. A small but significant expression is found in liver, ovary, testis, prostate, small intestine and leukocytes. Very low expression, nearly undetectable, in lung and spleen.

The protein resides in the cell membrane. Its subcellular location is the apical cell membrane. Functionally, ancillary protein that functions as a regulatory subunit of the voltage-gated potassium (Kv) channel complex composed of pore-forming and potassium-conducting alpha subunits and of regulatory beta subunits. KCNE2 beta subunit modulates the gating kinetics and enhances stability of the channel complex. Alters the gating of the delayed rectifier Kv channel containing KCNB1 alpha subunit. Associates with KCNH2/HERG alpha subunit Kv channel to form the rapidly activating component of the delayed rectifying potassium current (IKr) in heart. May associate with KCNQ2 and/or KCNQ3 alpha subunits to modulate the native M-type current. May associate with HCN1 and HCN2 channel subunits to increase potassium current. Forms a heterooligomer complex with KCNQ1/KVLQT1 alpha subunits which leads to currents with an apparently instantaneous activation, a rapid deactivation process and a linear current-voltage relationship and decreases the amplitude of the outward current. KCNQ1-KCNE2 channel associates with Na(+)-coupled myo-inositol symporter in the apical membrane of choroid plexus epithelium and regulates the myo-inositol gradient between blood and cerebrospinal fluid with an impact on neuron excitability. The sequence is that of Potassium voltage-gated channel subfamily E member 2 from Homo sapiens (Human).